A 240-amino-acid chain; its full sequence is Phosphoribosylaminoimidazole-succinocarboxamide synthase (240 aa).

Belongs to the SAICAR synthetase family.

The enzyme catalyses 5-amino-1-(5-phospho-D-ribosyl)imidazole-4-carboxylate + L-aspartate + ATP = (2S)-2-[5-amino-1-(5-phospho-beta-D-ribosyl)imidazole-4-carboxamido]succinate + ADP + phosphate + 2 H(+). The protein operates within purine metabolism; IMP biosynthesis via de novo pathway; 5-amino-1-(5-phospho-D-ribosyl)imidazole-4-carboxamide from 5-amino-1-(5-phospho-D-ribosyl)imidazole-4-carboxylate: step 1/2. The polypeptide is Phosphoribosylaminoimidazole-succinocarboxamide synthase (Acidithiobacillus ferrooxidans (strain ATCC 23270 / DSM 14882 / CIP 104768 / NCIMB 8455) (Ferrobacillus ferrooxidans (strain ATCC 23270))).